The primary structure comprises 797 residues: Methionine--tRNA ligase, cytoplasmic (797 aa).

The short motif at 26–36 is the 'HIGH' region element; that stretch reads PYVNNVPHLGN. Residues 348–352 carry the 'KMSKS' region motif; the sequence is KFSKS. Residue K351 coordinates ATP. Positions 601–634 are disordered; the sequence is DQLNKTKLSDAKKQKASSKGGGKPKPQPAADREI. In terms of domain architecture, tRNA-binding spans 635 to 738; sequence TMARLDIRVG…KTANIGERVT (104 aa).

It belongs to the class-I aminoacyl-tRNA synthetase family.

The protein localises to the cytoplasm. Its subcellular location is the cytosol. It carries out the reaction tRNA(Met) + L-methionine + ATP = L-methionyl-tRNA(Met) + AMP + diphosphate. The polypeptide is Methionine--tRNA ligase, cytoplasmic (Arabidopsis thaliana (Mouse-ear cress)).